Consider the following 219-residue polypeptide: MAVIQDIIAALWQHDFAALANPHVVSVVYFVMFATLFLENGLLPASFLPGDSLLLLAGALIAQDVMHFLPTIGILTAAASLGCWLSYIQGRWLGNTRTVKGWLAQLPAKYHQRATCMFDRHGLLALLAGRFLAFVRTLLPTMAGISGLSNRRFQFFNWLSGLLWVTVVTSFGYALSMIPFVKRHEDQVMTFLMILPVALLVAGLLGTLVVVIKKKYCNA.

Over 1 to 17 (MAVIQDIIAALWQHDFA) the chain is Cytoplasmic. The chain crosses the membrane as a helical span at residues 18–38 (ALANPHVVSVVYFVMFATLFL). The Periplasmic segment spans residues 39 to 67 (ENGLLPASFLPGDSLLLLAGALIAQDVMH). Residues 68–88 (FLPTIGILTAAASLGCWLSYI) form a helical membrane-spanning segment. The Cytoplasmic segment spans residues 89-160 (QGRWLGNTRT…RRFQFFNWLS (72 aa)). Residues 161-181 (GLLWVTVVTSFGYALSMIPFV) form a helical membrane-spanning segment. Residues 182-191 (KRHEDQVMTF) lie on the Periplasmic side of the membrane. Residues 192–212 (LMILPVALLVAGLLGTLVVVI) form a helical membrane-spanning segment. The Cytoplasmic segment spans residues 213–219 (KKKYCNA).

It belongs to the DedA family.

The protein resides in the cell inner membrane. This is Inner membrane protein YghB (yghB) from Salmonella typhimurium (strain LT2 / SGSC1412 / ATCC 700720).